Here is a 481-residue protein sequence, read N- to C-terminus: MAAAPGGSAQPAGPGPRLGFSTADSGVGMSGLNPGPAVPMKDHDAIKLFVGQIPRGLDEQDLKPLFEEFGRIYELTVLKDRLTGLHKGCAFLTYCARDSALKAQSALHEQKTLPGMNRPIQVKPAASEGRGEDRKLFVGMLGKQQGEEDVRRLFQPFGHIEECTVLRSPDGTSKGCAFVKFGSQGEAQAAIRGLHGSRTMAGASSSLVVKLADTDRERALRRMQQMAGHLGAFHPAPLPLGACGAYTTAILQHQAALLAAAQGPGLGPVAAVAAQMQHVAAFSLVAAPLLPAAAANSPPGSGPGTLPGLPAPIGVNGFGPLTPQTNGQPGSDTLYNNGLSPYPAQSPGVADPLQQAYAGMHHYAAAYPSAYAPVSTAFPQQPSALPQQQREGPEGCNLFIYHLPQEFGDAELIQTFLPFGAVVSAKVFVDRATNQSKCFGFVSFDNPTSAQTAIQAMNGFQIGMKRLKVQLKRPKDANRPY.

Residues 1 to 12 are compositionally biased toward low complexity; that stretch reads MAAAPGGSAQPA. The disordered stretch occupies residues 1–34; it reads MAAAPGGSAQPAGPGPRLGFSTADSGVGMSGLNP. RRM domains are found at residues 46–127, 134–214, and 396–474; these read IKLF…PAAS, RKLF…LADT, and CNLF…LKRP.

It belongs to the CELF/BRUNOL family. Expressed mainly in kidney, brain and testis and present in other tissues albeit at lower levels. Also expressed in fetal kidney.

Its subcellular location is the nucleus. It localises to the cytoplasm. RNA-binding protein implicated in the regulation of pre-mRNA alternative splicing. Mediates exon inclusion and/or exclusion in pre-mRNA that are subject to tissue-specific and developmentally regulated alternative splicing. Specifically activates exon 5 inclusion of TNNT2 in a muscle-specific splicing enhancer (MSE)-dependent manner. Promotes also exon exclusion of INSR pre-mRNA. The sequence is that of CUGBP Elav-like family member 6 (CELF6) from Homo sapiens (Human).